The chain runs to 555 residues: Protection of telomeres protein 1 (555 aa).

The protein belongs to the telombin family. In terms of assembly, self-associates. Interacts with ccq1, poz1 and tpz1.

It is found in the nucleus. The protein resides in the chromosome. Its subcellular location is the telomere. In terms of biological role, single-stranded telomeric DNA-binding protein that is required to protect the 3'-end telomeric overhang. It binds the consensus sequence 5'-GGTTAC-3'. Regulates telomerase and telomere length. This Schizosaccharomyces pombe (strain 972 / ATCC 24843) (Fission yeast) protein is Protection of telomeres protein 1 (pot1).